A 430-amino-acid polypeptide reads, in one-letter code: Mitochondrial distribution and morphology protein 12 (430 aa).

The SMP-LTD domain maps to Met1–Ile430. Disordered regions lie at residues Asp61–Asn117, Thr177–Glu276, and Met352–Ser377. Acidic residues predominate over residues Phe69 to Glu82. A compositionally biased stretch (basic and acidic residues) spans Ser85–Asn96. 2 stretches are compositionally biased toward polar residues: residues Ser211–Ile233 and Ala241–Gln251. Basic and acidic residues predominate over residues Pro265 to Glu276.

This sequence belongs to the MDM12 family. Component of the ER-mitochondria encounter structure (ERMES) or MDM complex, composed of MMM1, MDM10, MDM12 and MDM34. An MMM1 homodimer associates with one molecule of MDM12 on each side in a pairwise head-to-tail manner, and the SMP-LTD domains of MMM1 and MDM12 generate a continuous hydrophobic tunnel for phospholipid trafficking.

It is found in the mitochondrion outer membrane. The protein resides in the endoplasmic reticulum membrane. Component of the ERMES/MDM complex, which serves as a molecular tether to connect the endoplasmic reticulum (ER) and mitochondria. Components of this complex are involved in the control of mitochondrial shape and protein biogenesis, and function in nonvesicular lipid trafficking between the ER and mitochondria. MDM12 is required for the interaction of the ER-resident membrane protein MMM1 and the outer mitochondrial membrane-resident beta-barrel protein MDM10. The MDM12-MMM1 subcomplex functions in the major beta-barrel assembly pathway that is responsible for biogenesis of all mitochondrial outer membrane beta-barrel proteins, and acts in a late step after the SAM complex. The MDM10-MDM12-MMM1 subcomplex further acts in the TOM40-specific pathway after the action of the MDM12-MMM1 complex. Essential for establishing and maintaining the structure of mitochondria and maintenance of mtDNA nucleoids. The protein is Mitochondrial distribution and morphology protein 12 of Ajellomyces capsulatus (strain G186AR / H82 / ATCC MYA-2454 / RMSCC 2432) (Darling's disease fungus).